The sequence spans 35 residues: Conotoxin Cal6.1c (35 aa).

Positions 1–35 (GLNRPSKRCLAGSAPCEFHKRSTCCSGHCIIWWCA) are excised as a propeptide. Cystine bridges form between C9-C25, C16-C29, and C24-C34.

This sequence belongs to the conotoxin O1 superfamily. Expressed by the venom duct.

The protein localises to the secreted. Functionally, probable neurotoxin with unknown target. Possibly targets ion channels. This is Conotoxin Cal6.1c from Californiconus californicus (California cone).